The primary structure comprises 478 residues: ATP synthase subunit beta (478 aa).

ATP is bound at residue 164–171; that stretch reads GGAGVGKT.

This sequence belongs to the ATPase alpha/beta chains family. In terms of assembly, F-type ATPases have 2 components, CF(1) - the catalytic core - and CF(0) - the membrane proton channel. CF(1) has five subunits: alpha(3), beta(3), gamma(1), delta(1), epsilon(1). CF(0) has three main subunits: a(1), b(2) and c(9-12). The alpha and beta chains form an alternating ring which encloses part of the gamma chain. CF(1) is attached to CF(0) by a central stalk formed by the gamma and epsilon chains, while a peripheral stalk is formed by the delta and b chains.

The protein localises to the cell membrane. The catalysed reaction is ATP + H2O + 4 H(+)(in) = ADP + phosphate + 5 H(+)(out). Functionally, produces ATP from ADP in the presence of a proton gradient across the membrane. The catalytic sites are hosted primarily by the beta subunits. This is ATP synthase subunit beta from Streptomyces avermitilis (strain ATCC 31267 / DSM 46492 / JCM 5070 / NBRC 14893 / NCIMB 12804 / NRRL 8165 / MA-4680).